A 316-amino-acid chain; its full sequence is MGAGHSHDHPGGNERSLKIALALTGTFLIAEVVGGVMTKSLALISDAAHMLTDTVALAIALAAIAIAKRPADKKRTFGYYRFEILAAAFNALLLFGVAIYILYEAYLRLKSPPQIESTGMFVVAVLGLIINLISMRMLSSGQSSSLNVKGAYLEVWSDLLGSVGVIAGAIIIRFTGWAWVDSAIAVLIGLWVLPRTWILLKSSLNVLLEGVPDDVDLAEVEKQILATPGVKSFHDLHIWALTSGKASLTVHVVNDTAVNPEMEVLPELKQMLADKFDITHVTIQFELAPCEQADAAQHFNASPALVGSKSLAAGGN.

Topologically, residues 1–16 (MGAGHSHDHPGGNERS) are cytoplasmic. The chain crosses the membrane as a helical span at residues 17–37 (LKIALALTGTFLIAEVVGGVM). Over 38 to 46 (TKSLALISD) the chain is Periplasmic. Residues 47–67 (AAHMLTDTVALAIALAAIAIA) traverse the membrane as a helical segment. At 68–81 (KRPADKKRTFGYYR) the chain is on the cytoplasmic side. The helical transmembrane segment at 82–102 (FEILAAAFNALLLFGVAIYIL) threads the bilayer. Over 103–114 (YEAYLRLKSPPQ) the chain is Periplasmic. A helical transmembrane segment spans residues 115 to 135 (IESTGMFVVAVLGLIINLISM). Residues 136–151 (RMLSSGQSSSLNVKGA) are Cytoplasmic-facing. Helical transmembrane passes span 152 to 172 (YLEV…AIII) and 174 to 194 (FTGW…WVLP). Over 195 to 316 (RTWILLKSSL…GSKSLAAGGN (122 aa)) the chain is Cytoplasmic.

The protein belongs to the cation diffusion facilitator (CDF) transporter (TC 2.A.4) family. SLC30A subfamily.

It is found in the cell inner membrane. With respect to regulation, efflux is inhibited by FCCP. In terms of biological role, mediates a low-level metal ion resistance, probably by efflux of cations from the cytoplasm into the periplasm. Also mediates resistance to cobalt, cadmium and zinc via regulation of the Czc system. May repress expression of the Czc system by an export of the inducing cations. Binds and transports zinc. Can also bind cobalt, copper and nickel. This Cupriavidus metallidurans (strain ATCC 43123 / DSM 2839 / NBRC 102507 / CH34) (Ralstonia metallidurans) protein is Metal cation efflux system protein CzcD (czcD).